Consider the following 535-residue polypeptide: Bifunctional purine biosynthesis protein PurH (535 aa).

Positions 6–151 (TRLPVRRALI…KNHKDVAIVV (146 aa)) constitute an MGS-like domain.

Belongs to the PurH family.

It carries out the reaction (6R)-10-formyltetrahydrofolate + 5-amino-1-(5-phospho-beta-D-ribosyl)imidazole-4-carboxamide = 5-formamido-1-(5-phospho-D-ribosyl)imidazole-4-carboxamide + (6S)-5,6,7,8-tetrahydrofolate. The catalysed reaction is IMP + H2O = 5-formamido-1-(5-phospho-D-ribosyl)imidazole-4-carboxamide. It functions in the pathway purine metabolism; IMP biosynthesis via de novo pathway; 5-formamido-1-(5-phospho-D-ribosyl)imidazole-4-carboxamide from 5-amino-1-(5-phospho-D-ribosyl)imidazole-4-carboxamide (10-formyl THF route): step 1/1. It participates in purine metabolism; IMP biosynthesis via de novo pathway; IMP from 5-formamido-1-(5-phospho-D-ribosyl)imidazole-4-carboxamide: step 1/1. This is Bifunctional purine biosynthesis protein PurH from Azotobacter vinelandii (strain DJ / ATCC BAA-1303).